Reading from the N-terminus, the 241-residue chain is Translation initiation factor IF-3 (241 aa).

Positions K178–A241 are disordered. Residues T180–A197 show a composition bias toward basic and acidic residues. The span at A208–E229 shows a compositional bias: acidic residues. Positions A230–A241 are enriched in low complexity.

The protein belongs to the IF-3 family. In terms of assembly, monomer.

Its subcellular location is the cytoplasm. Its function is as follows. IF-3 binds to the 30S ribosomal subunit and shifts the equilibrium between 70S ribosomes and their 50S and 30S subunits in favor of the free subunits, thus enhancing the availability of 30S subunits on which protein synthesis initiation begins. The polypeptide is Translation initiation factor IF-3 (Streptomyces avermitilis (strain ATCC 31267 / DSM 46492 / JCM 5070 / NBRC 14893 / NCIMB 12804 / NRRL 8165 / MA-4680)).